The chain runs to 440 residues: Tuliposide B-converting enzyme 1, amyloplastic (440 aa).

Residues 1 to 58 (MSIVSFCSSLPAGPHGFKHGRGTRDMVHMPCIVRRTARSPAQACRLLRWNKYHCAAVP) constitute an amyloplast transit peptide. The active-site Acyl-ester intermediate is the S232. Active-site charge relay system residues include D325 and H357.

The protein belongs to the AB hydrolase superfamily. Homodimer. Post-translationally, not glycosylated. As to expression, expressed in the pollen grains.

It is found in the plastid. Its subcellular location is the amyloplast. It catalyses the reaction 6-tuliposide B = tulipalin B + D-glucose. Inhibited by Ag(+), Cu(2+), Fe(2+), Hg(2+), V(3+) and phenylmethylsulfonyl fluoride (PMSF). Functionally, lactone-forming carboxylesterase, specifically catalyzing intramolecular transesterification, but not hydrolysis. Involved in the biosynthesis of tulipalins, defensive chemicals that show antimicrobial activities against a broad range of strains of bacteria and fungi. Substrates are 6-tuliposide B &gt; 6-tuliposide A. The chain is Tuliposide B-converting enzyme 1, amyloplastic from Tulipa gesneriana (Garden tulip).